The sequence spans 341 residues: NADH-quinone oxidoreductase subunit H (341 aa).

8 consecutive transmembrane segments (helical) span residues 38–58 (PSVVGPFGLLQPFADAIKLLV), 70–90 (ILFIMAPMLTFILALIVWAVI), 115–135 (IGVLYVLAISSLGIYGIIVAG), 161–181 (MGLIVATVVITTGTLNLGEMV), 187–207 (MPFWIDLLMMPIGVVFFISLL), 239–259 (LFFLGEYANMILGSAMMTIFF), 275–295 (IPGLIWFVLKIVLLLFIFVWT), and 314–334 (VFLPISVLWVILISGVLLFTG).

This sequence belongs to the complex I subunit 1 family. NDH-1 is composed of 14 different subunits. Subunits NuoA, H, J, K, L, M, N constitute the membrane sector of the complex.

The protein localises to the cell membrane. The enzyme catalyses a quinone + NADH + 5 H(+)(in) = a quinol + NAD(+) + 4 H(+)(out). In terms of biological role, NDH-1 shuttles electrons from NADH, via FMN and iron-sulfur (Fe-S) centers, to quinones in the respiratory chain. The immediate electron acceptor for the enzyme in this species is believed to be ubiquinone. Couples the redox reaction to proton translocation (for every two electrons transferred, four hydrogen ions are translocated across the cytoplasmic membrane), and thus conserves the redox energy in a proton gradient. This subunit may bind ubiquinone. In Wolbachia sp. subsp. Brugia malayi (strain TRS), this protein is NADH-quinone oxidoreductase subunit H.